The following is an 80-amino-acid chain: Protein FAM229B (80 aa).

The disordered stretch occupies residues 1–44 (MPFRFGTQPRRFPVEGGDSSIGLEPGLSSSATCNGKEMSPTRQL).

The protein belongs to the FAM229 family.

In Bos taurus (Bovine), this protein is Protein FAM229B (FAM229B).